Here is a 466-residue protein sequence, read N- to C-terminus: Asparagine--tRNA ligase (466 aa).

It belongs to the class-II aminoacyl-tRNA synthetase family. As to quaternary structure, homodimer.

The protein resides in the cytoplasm. The catalysed reaction is tRNA(Asn) + L-asparagine + ATP = L-asparaginyl-tRNA(Asn) + AMP + diphosphate + H(+). In Shewanella sediminis (strain HAW-EB3), this protein is Asparagine--tRNA ligase.